The following is a 779-amino-acid chain: Ribosome-releasing factor 2, mitochondrial (779 aa).

Residues 68 to 353 enclose the tr-type G domain; it reads AKIRNIGIMA…AVTTYLPSPE (286 aa). GTP contacts are provided by residues 77–84, 141–145, and 195–198; these read AHIDAGKT, DTPGH, and NKMD.

Belongs to the TRAFAC class translation factor GTPase superfamily. Classic translation factor GTPase family. EF-G/EF-2 subfamily.

The protein resides in the mitochondrion. It catalyses the reaction GTP + H2O = GDP + phosphate + H(+). Mitochondrial GTPase that mediates the disassembly of ribosomes from messenger RNA at the termination of mitochondrial protein biosynthesis. Acts in collaboration with MRRF. GTP hydrolysis follows the ribosome disassembly and probably occurs on the ribosome large subunit. Not involved in the GTP-dependent ribosomal translocation step during translation elongation. The polypeptide is Ribosome-releasing factor 2, mitochondrial (Gfm2) (Rattus norvegicus (Rat)).